We begin with the raw amino-acid sequence, 166 residues long: Large ribosomal subunit protein uL10 (166 aa).

The protein belongs to the universal ribosomal protein uL10 family. Part of the ribosomal stalk of the 50S ribosomal subunit. The N-terminus interacts with L11 and the large rRNA to form the base of the stalk. The C-terminus forms an elongated spine to which L12 dimers bind in a sequential fashion forming a multimeric L10(L12)X complex.

Functionally, forms part of the ribosomal stalk, playing a central role in the interaction of the ribosome with GTP-bound translation factors. The sequence is that of Large ribosomal subunit protein uL10 from Aromatoleum aromaticum (strain DSM 19018 / LMG 30748 / EbN1) (Azoarcus sp. (strain EbN1)).